The following is a 175-amino-acid chain: 6,7-dimethyl-8-ribityllumazine synthase (175 aa).

5-amino-6-(D-ribitylamino)uracil contacts are provided by residues Phe24, 58–60 (ALE), and 82–84 (AVI). (2S)-2-hydroxy-3-oxobutyl phosphate is bound at residue 87–88 (ET). His90 serves as the catalytic Proton donor. Asn115 is a 5-amino-6-(D-ribitylamino)uracil binding site. Residue Arg129 coordinates (2S)-2-hydroxy-3-oxobutyl phosphate. The segment at 151 to 175 (LEPEEDDEDEDEEDEDFDDEETDRR) is disordered. The segment covering 152-175 (EPEEDDEDEDEEDEDFDDEETDRR) has biased composition (acidic residues).

The protein belongs to the DMRL synthase family.

It catalyses the reaction (2S)-2-hydroxy-3-oxobutyl phosphate + 5-amino-6-(D-ribitylamino)uracil = 6,7-dimethyl-8-(1-D-ribityl)lumazine + phosphate + 2 H2O + H(+). It functions in the pathway cofactor biosynthesis; riboflavin biosynthesis; riboflavin from 2-hydroxy-3-oxobutyl phosphate and 5-amino-6-(D-ribitylamino)uracil: step 1/2. Functionally, catalyzes the formation of 6,7-dimethyl-8-ribityllumazine by condensation of 5-amino-6-(D-ribitylamino)uracil with 3,4-dihydroxy-2-butanone 4-phosphate. This is the penultimate step in the biosynthesis of riboflavin. The sequence is that of 6,7-dimethyl-8-ribityllumazine synthase from Bordetella petrii (strain ATCC BAA-461 / DSM 12804 / CCUG 43448).